Consider the following 273-residue polypeptide: Imidazole glycerol phosphate synthase subunit HisF (273 aa).

Residues Asp-12 and Asp-136 contribute to the active site.

This sequence belongs to the HisA/HisF family. In terms of assembly, heterodimer of HisH and HisF.

The protein resides in the cytoplasm. It catalyses the reaction 5-[(5-phospho-1-deoxy-D-ribulos-1-ylimino)methylamino]-1-(5-phospho-beta-D-ribosyl)imidazole-4-carboxamide + L-glutamine = D-erythro-1-(imidazol-4-yl)glycerol 3-phosphate + 5-amino-1-(5-phospho-beta-D-ribosyl)imidazole-4-carboxamide + L-glutamate + H(+). It functions in the pathway amino-acid biosynthesis; L-histidine biosynthesis; L-histidine from 5-phospho-alpha-D-ribose 1-diphosphate: step 5/9. IGPS catalyzes the conversion of PRFAR and glutamine to IGP, AICAR and glutamate. The HisF subunit catalyzes the cyclization activity that produces IGP and AICAR from PRFAR using the ammonia provided by the HisH subunit. The protein is Imidazole glycerol phosphate synthase subunit HisF of Halobacterium salinarum (strain ATCC 29341 / DSM 671 / R1).